Here is an 87-residue protein sequence, read N- to C-terminus: uncharacterized protein (87 aa).

Helical transmembrane passes span 7–27 (LFFI…LYSI) and 64–84 (GINI…IPLF).

The protein resides in the membrane. This is an uncharacterized protein from Schizosaccharomyces pombe (strain 972 / ATCC 24843) (Fission yeast).